A 380-amino-acid polypeptide reads, in one-letter code: Large ribosomal subunit protein mL38 (380 aa).

Residues Met1–Gly26 constitute a mitochondrion transit peptide. Positions Arg99–Thr127 form a coiled coil.

This sequence belongs to the phosphatidylethanolamine-binding protein family. Mitochondrion-specific ribosomal protein mL38 subfamily. As to quaternary structure, component of the mitochondrial large ribosomal subunit (mt-LSU). Mature mammalian 55S mitochondrial ribosomes consist of a small (28S) and a large (39S) subunit. The 28S small subunit contains a 12S ribosomal RNA (12S mt-rRNA) and 30 different proteins. The 39S large subunit contains a 16S rRNA (16S mt-rRNA), a copy of mitochondrial valine transfer RNA (mt-tRNA(Val)), which plays an integral structural role, and 52 different proteins. mL38 is located at the central protuberance.

It is found in the mitochondrion. The protein is Large ribosomal subunit protein mL38 (MRPL38) of Homo sapiens (Human).